Consider the following 432-residue polypeptide: Uracil permease (432 aa).

12 helical membrane-spanning segments follow: residues 25–45 (LFAM…DPSI), 65–85 (VPAY…AKTA), 89–109 (GAAM…ALII), 124–144 (VVVG…AVGM), 155–175 (LLHF…SVLA), 181–201 (LIPV…VGLV), 206–226 (VAAA…DYPV), 228–248 (VTWE…SEHI), 305–325 (VYSV…GFVG), 330–350 (LISS…FGII), 370–390 (NLVI…LKIS), and 393–413 (FQIT…LILP).

The protein belongs to the nucleobase:cation symporter-2 (NCS2) (TC 2.A.40) family.

Its subcellular location is the cell membrane. Functionally, transport of uracil in the cell. This Bacillus caldolyticus protein is Uracil permease (pyrP).